The primary structure comprises 57 residues: Small ribosomal subunit protein bS21 (57 aa).

Belongs to the bacterial ribosomal protein bS21 family.

In Bacillus pumilus (strain SAFR-032), this protein is Small ribosomal subunit protein bS21.